Here is a 94-residue protein sequence, read N- to C-terminus: Co-chaperonin GroES (94 aa).

Belongs to the GroES chaperonin family. In terms of assembly, heptamer of 7 subunits arranged in a ring. Interacts with the chaperonin GroEL.

The protein localises to the cytoplasm. Its function is as follows. Together with the chaperonin GroEL, plays an essential role in assisting protein folding. The GroEL-GroES system forms a nano-cage that allows encapsulation of the non-native substrate proteins and provides a physical environment optimized to promote and accelerate protein folding. GroES binds to the apical surface of the GroEL ring, thereby capping the opening of the GroEL channel. The polypeptide is Co-chaperonin GroES (Streptococcus pneumoniae (strain CGSP14)).